A 67-amino-acid polypeptide reads, in one-letter code: Conotoxin Cl6.7 (67 aa).

An N-terminal signal peptide occupies residues 1–24 (MKVTAVLMVAVLVLTACQLTTANT). A propeptide spanning residues 25–39 (TDYVRRIPARKSTMS) is cleaved from the precursor. 3 cysteine pairs are disulfide-bonded: C43/C58, C50/C62, and C57/C66.

Belongs to the conotoxin O1 superfamily. Expressed by the venom duct.

The protein resides in the secreted. The chain is Conotoxin Cl6.7 from Californiconus californicus (California cone).